Here is a 218-residue protein sequence, read N- to C-terminus: Oxygen regulatory protein NreC (218 aa).

A Response regulatory domain is found at 2-119; sequence KIVIADDHAV…QLILAVRTVY (118 aa). D53 carries the 4-aspartylphosphate modification. The 66-residue stretch at 149–214 folds into the HTH luxR-type domain; it reads SSDPFKILSK…ELVEYALKKK (66 aa). Positions 173 to 192 form a DNA-binding region, H-T-H motif; sequence NKDIAEKLFVSVKTVEAHKT.

Phosphorylated by NreB.

Its subcellular location is the cytoplasm. In terms of biological role, member of the two-component regulatory system NreB/NreC involved in the control of dissimilatory nitrate/nitrite reduction in response to oxygen. Phosphorylated NreC binds to a GC-rich palindromic sequence at the promoters of the nitrate (narGHJI) and nitrite (nir) reductase operons, as well as the putative nitrate transporter gene narT, and activates their expression. The chain is Oxygen regulatory protein NreC (nreC) from Staphylococcus epidermidis (strain ATCC 35984 / DSM 28319 / BCRC 17069 / CCUG 31568 / BM 3577 / RP62A).